The chain runs to 278 residues: Potassium/proton antiporter CemA (278 aa).

The next 4 helical transmembrane spans lie at 60 to 80 (YLVL…SLVF), 163 to 183 (ILAF…IAVL), 201 to 221 (FLII…GWEV), and 239 to 259 (IFLF…YWIF).

The protein belongs to the CemA family.

Its subcellular location is the plastid. The protein resides in the chloroplast inner membrane. It catalyses the reaction K(+)(in) + H(+)(out) = K(+)(out) + H(+)(in). Contributes to K(+)/H(+) antiport activity by supporting proton efflux to control proton extrusion and homeostasis in chloroplasts in a light-dependent manner to modulate photosynthesis. Prevents excessive induction of non-photochemical quenching (NPQ) under continuous-light conditions. Indirectly promotes efficient inorganic carbon uptake into chloroplasts. The chain is Potassium/proton antiporter CemA from Guillardia theta (Cryptophyte).